An 89-amino-acid polypeptide reads, in one-letter code: MYILELLLKGNPAPIVVHQKEEEAANRAYQSVVNALQSGSPQSLELTCDRTGKKVFLLTGELCGVQMTTKSGGPGAPGTRPGFLAQLQG.

The tract at residues 69-89 (TKSGGPGAPGTRPGFLAQLQG) is disordered.

This sequence belongs to the UPF0367 family.

The polypeptide is UPF0367 protein CYA_1023 (Synechococcus sp. (strain JA-3-3Ab) (Cyanobacteria bacterium Yellowstone A-Prime)).